The primary structure comprises 432 residues: Transcobalamin-2 (432 aa).

The first 18 residues, 1-18 (MGHLGALLFLLGGLGALA), serve as a signal peptide directing secretion. 3 cysteine pairs are disulfide-bonded: cysteine 21–cysteine 270, cysteine 116–cysteine 312, and cysteine 165–cysteine 208. An N-linked (GlcNAc...) asparagine glycan is attached at asparagine 94. Cob(II)alamin is bound by residues glutamine 104, 152 to 156 (TSYYQ), histidine 193, 193 to 197 (HVSVD), asparagine 245, serine 248, glutamine 294, and 400 to 402 (WQV).

Belongs to the eukaryotic cobalamin transport proteins family. In terms of assembly, interacts with CD320 (via LDL-receptor class A domains). Expressed in mammary gland, kidney, lymphatic nodes and liver.

The protein localises to the secreted. Primary vitamin B12-binding and transport protein. Delivers cobalamin to cells. This Bos taurus (Bovine) protein is Transcobalamin-2 (TCN2).